A 223-amino-acid chain; its full sequence is Protein DEHYDRATION-INDUCED 19 homolog 3 (223 aa).

A Phosphothreonine modification is found at Thr-114. Ser-116 is modified (phosphoserine).

Belongs to the Di19 family. In terms of processing, phosphorylated in vitro by CPK3 or CPK11. In terms of tissue distribution, expressed in seedlings, roots, leaves, stems, flowers and siliques.

It localises to the nucleus. In Arabidopsis thaliana (Mouse-ear cress), this protein is Protein DEHYDRATION-INDUCED 19 homolog 3 (DI19-3).